The chain runs to 179 residues: Putative invertase inhibitor (179 aa).

The first 23 residues, 1 to 23, serve as a signal peptide directing secretion; it reads MKLSFSLCIFFFNLLLLLQAVIS. 2 disulfide bridges follow: Cys-31-Cys-46 and Cys-102-Cys-142.

The protein belongs to the PMEI family. As to quaternary structure, monomer. Post-translationally, not glycosylated. Expressed in pollen (at protein level). Expressed in stem, but not leaves (at protein level). Expressed in pollen.

It localises to the secreted. It is found in the cell wall. The protein resides in the endoplasmic reticulum. Invertase inhibitor. This Platanus acerifolia (London plane tree) protein is Putative invertase inhibitor.